Here is a 466-residue protein sequence, read N- to C-terminus: Asparagine--tRNA ligase (466 aa).

This sequence belongs to the class-II aminoacyl-tRNA synthetase family. Homodimer.

It localises to the cytoplasm. The catalysed reaction is tRNA(Asn) + L-asparagine + ATP = L-asparaginyl-tRNA(Asn) + AMP + diphosphate + H(+). In Psychromonas ingrahamii (strain DSM 17664 / CCUG 51855 / 37), this protein is Asparagine--tRNA ligase.